Consider the following 906-residue polypeptide: Nuclear factor NF-kappa-B p100 subunit (906 aa).

One can recognise an RHD domain in the interval 34–223; sequence AVGPYLVIIE…DPIHDSKSPG (190 aa). The Nuclear localization signal motif lies at 336-340; that stretch reads RNRKK. The tract at residues 345-374 is GRR; the sequence is FPQHFGGGSHMGGAGGAGGFGAGGGGNLSF. 6 ANK repeats span residues 472–501, 511–540, 544–573, 582–611, 616–646, and 650–679; these read NGDTPLHLAIIHEQTAVIKQLIEVVVSIPS, LQQTPLHLAVITKQPQVVQLLLEAHANPTL, YGNSLLHLALQAADEEMLRMLLAHLASATP, QGLLPVHLAVKAKSPACLDLLVRKGADVNG, GGRTPLHLAVEMENLNMATHLVKKLGANVNS, and AGNTPLHLAAGLGSPTLTKLLLKAGADVQR. Disordered regions lie at residues 677–734 and 857–906; these read VQRE…GPRQ and EPLE…QQVH. A compositionally biased stretch (low complexity) spans 684–695; that stretch reads PVSPSSVRVPSS. A compositionally biased stretch (acidic residues) spans 697–708; sequence TDGDPEEQEQEQ. One can recognise a Death domain in the interval 771 to 857; it reads RNHLLSLDTD…GAVRMLRKPE (87 aa).

As to quaternary structure, component of the NF-kappa-B RelB-p52 complex. In terms of processing, while translation occurs, the particular unfolded structure after the GRR repeat promotes the generation of p52 making it an acceptable substrate for the proteasome. This process is known as cotranslational processing. The processed form is active and the unprocessed form acts as an inhibitor (I kappa B-like), being able to form cytosolic complexes with NF-kappa B, trapping it in the cytoplasm. Complete folding of the region downstream of the GRR repeat precludes processing. Post-translationally, constitutive processing is tightly suppressed by its C-terminal processing inhibitory domain, named PID, which contains the death domain.

It is found in the nucleus. Its subcellular location is the cytoplasm. In terms of biological role, NF-kappa-B is a pleiotropic transcription factor present in almost all cell types and is the endpoint of a series of signal transduction events that are initiated by a vast array of stimuli related to many biological processes such as inflammation, immunity, differentiation, cell growth, tumorigenesis and apoptosis. NF-kappa-B is a homo- or heterodimeric complex formed by the Rel-like domain-containing proteins RELA/p65, RELB, NFKB1/p105, NFKB1/p50, REL and NFKB2/p52. The dimers bind at kappa-B sites in the DNA of their target genes and the individual dimers have distinct preferences for different kappa-B sites that they can bind with distinguishable affinity and specificity. Different dimer combinations act as transcriptional activators or repressors, respectively. NF-kappa-B is controlled by various mechanisms of post-translational modification and subcellular compartmentalization as well as by interactions with other cofactors or corepressors. NF-kappa-B complexes are held in the cytoplasm in an inactive state complexed with members of the NF-kappa-B inhibitor (I-kappa-B) family. In a conventional activation pathway, I-kappa-B is phosphorylated by I-kappa-B kinases (IKKs) in response to different activators, subsequently degraded thus liberating the active NF-kappa-B complex which translocates to the nucleus. In a non-canonical activation pathway, the MAP3K14-activated CHUK/IKKA homodimer phosphorylates NFKB2/p100 associated with RelB, inducing its proteolytic processing to NFKB2/p52 and the formation of NF-kappa-B RelB-p52 complexes. The NF-kappa-B heterodimeric RelB-p52 complex is a transcriptional activator. NFKB2 appears to have dual functions such as cytoplasmic retention of attached NF-kappa-B proteins by p100 and generation of p52 by a cotranslational processing. The proteasome-mediated process ensures the production of both p52 and p100 and preserves their independent function. p52 binds to the kappa-B consensus sequence 5'-GGRNNYYCC-3', located in the enhancer region of genes involved in immune response and acute phase reactions. In concert with RELB, may play a role in the regulation of the circadian clock. This chain is Nuclear factor NF-kappa-B p100 subunit (NFKB2), found in Gallus gallus (Chicken).